An 828-amino-acid polypeptide reads, in one-letter code: BEN domain-containing protein 3 (828 aa).

Residue Lys20 forms a Glycyl lysine isopeptide (Lys-Gly) (interchain with G-Cter in SUMO); alternate linkage. Lys20 participates in a covalent cross-link: Glycyl lysine isopeptide (Lys-Gly) (interchain with G-Cter in SUMO1); alternate. A Glycyl lysine isopeptide (Lys-Gly) (interchain with G-Cter in SUMO2); alternate cross-link involves residue Lys20. Glycyl lysine isopeptide (Lys-Gly) (interchain with G-Cter in SUMO2) cross-links involve residues Lys41, Lys56, Lys58, Lys73, Lys128, Lys129, Lys137, Lys142, and Lys158. The short motif at 56-58 is the Nuclear localization signal element; it reads KRK. A Phosphoserine modification is found at Ser164. The interval 164–184 is disordered; the sequence is SPSSLRLLNEPQKRDCGSTGA. A Glycyl lysine isopeptide (Lys-Gly) (interchain with G-Cter in SUMO2) cross-link involves residue Lys176. In terms of domain architecture, BEN 1 spans 242-343; that stretch reads PPPEYQLTAA…DFFSRFWAQR (102 aa). Ser379 bears the Phosphoserine mark. The BEN 2 domain maps to 387 to 487; sequence ASDHVVDTQD…DELEGLGLDA (101 aa). Lys427 is covalently cross-linked (Glycyl lysine isopeptide (Lys-Gly) (interchain with G-Cter in SUMO2)). The disordered stretch occupies residues 483–504; the sequence is LGLDAGSEGDPPRDDCYDSSSL. Position 489 is a phosphoserine (Ser489). Lys512 participates in a covalent cross-link: Glycyl lysine isopeptide (Lys-Gly) (interchain with G-Cter in SUMO); alternate. Lys512 is covalently cross-linked (Glycyl lysine isopeptide (Lys-Gly) (interchain with G-Cter in SUMO2); alternate). Residue Lys528 forms a Glycyl lysine isopeptide (Lys-Gly) (interchain with G-Cter in SUMO2) linkage. Residues 548–650 form the BEN 3 domain; the sequence is VPGADCLLSK…ERCRRRDTEQ (103 aa). Lys700 participates in a covalent cross-link: Glycyl lysine isopeptide (Lys-Gly) (interchain with G-Cter in SUMO2). A BEN 4 domain is found at 715-816; it reads VPSPYLLSDK…ERCRRPNRKK (102 aa).

Homooligomer, probably a homooctamer. Interacts with HDAC2 and HDAC3, but not HDAC1. Interacts with SALL4. Interacts with SMARCA5/SNF2H, BAZ2A/TIP5 and USP21. Interacts with the nucleosome remodeling and histone deacetylase (NuRD) repressor complex. Interacts (via BEN domains 1 and 3) with ERCC6L (via N-terminal TPR repeat); the interaction is direct. Post-translationally, sumoylated at Lys-20 by SUMO1 and at Lys-512 by SUMO1, SUMO2 and SUMO3. Sumoylation probably occurs sequentially, with that of Lys-20 preceding that of Lys-512. It does not alter association with heterochromatin, but is required for the repression of transcription. Expressed at least in heart, kidney, liver, ovary and spleen, with highest levels in spleen and lowest in heart. Expressed on the surface of T-cells.

Its subcellular location is the nucleus. It localises to the nucleolus. Functionally, transcriptional repressor which associates with the NoRC (nucleolar remodeling complex) complex and plays a key role in repressing rDNA transcription. The sumoylated form modulates the stability of the NoRC complex component BAZ2A/TIP5 by controlling its USP21-mediated deubiquitination. Binds to unmethylated major satellite DNA and is involved in the recruitment of the Polycomb repressive complex 2 (PRC2) to major satellites. Stimulates the ERCC6L translocase and ATPase activities. The polypeptide is BEN domain-containing protein 3 (BEND3) (Homo sapiens (Human)).